We begin with the raw amino-acid sequence, 447 residues long: Probable alpha-galactosidase B (447 aa).

The signal sequence occupies residues 1-22; the sequence is MTTFLSLTTAAAVLTLARGSNA. 2 disulfide bridges follow: Cys45/Cys77 and Cys127/Cys157. The active-site Nucleophile is the Asp155. 2 N-linked (GlcNAc...) asparagine glycosylation sites follow: Asn162 and Asn180. 225–229 is a substrate binding site; it reads NWGQA. The N-linked (GlcNAc...) asparagine glycan is linked to Asn236. Asp247 acts as the Proton donor in catalysis. Asn286 carries an N-linked (GlcNAc...) asparagine glycan.

It belongs to the glycosyl hydrolase 27 family.

The protein localises to the secreted. It catalyses the reaction Hydrolysis of terminal, non-reducing alpha-D-galactose residues in alpha-D-galactosides, including galactose oligosaccharides, galactomannans and galactolipids.. Hydrolyzes a variety of simple alpha-D-galactoside as well as more complex molecules such as oligosaccharides and polysaccharides. This chain is Probable alpha-galactosidase B (aglB), found in Neosartorya fischeri (strain ATCC 1020 / DSM 3700 / CBS 544.65 / FGSC A1164 / JCM 1740 / NRRL 181 / WB 181) (Aspergillus fischerianus).